The following is a 557-amino-acid chain: Hdr-like menaquinol oxidoreductase iron-sulfur subunit (557 aa).

4Fe-4S ferredoxin-type domains are found at residues 86 to 115 (RAFKVFMDICVRCGACADKCHYYIGTGDPK) and 155 to 184 (KEWYYYLLQCSLCRRCSLFCPYGIDTAEVV). Residues C95, C98, C101, C105, C164, C167, C170, and C174 each coordinate [4Fe-4S] cluster.

[4Fe-4S] cluster serves as cofactor.

The protein localises to the membrane. Has menaquinol-oxidizing activity. The HmeC and HmeD subunits may together mediate electron transfer from menaquinol to an unidentified electron acceptor on the cytoplasmic side of the membrane. The protein is Hdr-like menaquinol oxidoreductase iron-sulfur subunit (hmeD) of Archaeoglobus profundus (strain DSM 5631 / JCM 9629 / NBRC 100127 / Av18).